The sequence spans 135 residues: 6,7-dimethyl-8-ribityllumazine synthase (135 aa).

5-amino-6-(D-ribitylamino)uracil is bound by residues Phe-12, 44–46, and 68–70; these read AYD and CVI. Position 73–74 (73–74) interacts with (2S)-2-hydroxy-3-oxobutyl phosphate; sequence AT. His-76 acts as the Proton donor in catalysis. Leu-101 is a binding site for 5-amino-6-(D-ribitylamino)uracil. (2S)-2-hydroxy-3-oxobutyl phosphate is bound at residue Arg-116.

The protein belongs to the DMRL synthase family.

It catalyses the reaction (2S)-2-hydroxy-3-oxobutyl phosphate + 5-amino-6-(D-ribitylamino)uracil = 6,7-dimethyl-8-(1-D-ribityl)lumazine + phosphate + 2 H2O + H(+). Its pathway is cofactor biosynthesis; riboflavin biosynthesis; riboflavin from 2-hydroxy-3-oxobutyl phosphate and 5-amino-6-(D-ribitylamino)uracil: step 1/2. In terms of biological role, catalyzes the formation of 6,7-dimethyl-8-ribityllumazine by condensation of 5-amino-6-(D-ribitylamino)uracil with 3,4-dihydroxy-2-butanone 4-phosphate. This is the penultimate step in the biosynthesis of riboflavin. The protein is 6,7-dimethyl-8-ribityllumazine synthase of Methanoculleus marisnigri (strain ATCC 35101 / DSM 1498 / JR1).